We begin with the raw amino-acid sequence, 542 residues long: Chaperonin GroEL 1 (542 aa).

ATP-binding positions include 29–32 (TIGP), 86–90 (DGTTT), Gly-414, 479–481 (DAL), and Asp-495.

Belongs to the chaperonin (HSP60) family. In terms of assembly, forms a cylinder of 14 subunits composed of two heptameric rings stacked back-to-back. Interacts with the co-chaperonin GroES.

The protein localises to the cytoplasm. The enzyme catalyses ATP + H2O + a folded polypeptide = ADP + phosphate + an unfolded polypeptide.. Its function is as follows. Together with its co-chaperonin GroES, plays an essential role in assisting protein folding. The GroEL-GroES system forms a nano-cage that allows encapsulation of the non-native substrate proteins and provides a physical environment optimized to promote and accelerate protein folding. This Synechococcus sp. (strain JA-3-3Ab) (Cyanobacteria bacterium Yellowstone A-Prime) protein is Chaperonin GroEL 1.